A 37-amino-acid chain; its full sequence is uncharacterized protein (37 aa).

Residues 16–36 (FALIVVLFILLIIVGTAFVGG) form a helical membrane-spanning segment.

The protein belongs to the SscA family.

It is found in the membrane. This is an uncharacterized protein from Bacillus subtilis (strain 168).